A 476-amino-acid chain; its full sequence is MIYNMSTELFSTLPYKVADITLADFGRKEIDLAEKEMPGLMALREKYGESKPLKGARIMGSLHMTIQTAVLIETLVALGAEVRWCSCNIYSTQDHAAAAIAASGVAVFAWKGENLADYWWCTLQALNFPGGKGPNVIVDDGGDATMMIHVGYDAENDAAVLDKEVHAEDEIELNAILKKVLAEDKTRWHRVAEEMRGVSEETTTGVHRLYQMQEEGKLLFPAFNVNDSVTKSKFDNLYGCRESLADGIKRATDVMIAGKVVVVCGYGDVGKGCSHSMRSYGARVLVTEVDPICALQAAMEGFEVVTMEDACTEGNIFVTTTGNIDIIRIDHMEKMKDQAIVCNIGHFDNEIQVDALKHYSGIKCVNIKPQVDRYYFPDGHSILLLADGRLVNLGCATGHPSFVMSNSFTNQTLAQIELFNKKYEVNVYRLPKHLDEEVARLHLEKIGVKLTKLTPEQAAYIGVSVDGPYKAEHYRY.

Residues Thr-65, Asp-140, and Glu-201 each contribute to the substrate site. An NAD(+)-binding site is contributed by 202–204 (TTT). The substrate site is built by Lys-231 and Asp-235. NAD(+) contacts are provided by residues Asn-236, 265–270 (GYGDVG), Glu-288, Asn-323, 344–346 (IGH), and Asn-392.

Belongs to the adenosylhomocysteinase family. NAD(+) is required as a cofactor.

It is found in the cytoplasm. It carries out the reaction S-adenosyl-L-homocysteine + H2O = L-homocysteine + adenosine. The protein operates within amino-acid biosynthesis; L-homocysteine biosynthesis; L-homocysteine from S-adenosyl-L-homocysteine: step 1/1. May play a key role in the regulation of the intracellular concentration of adenosylhomocysteine. In Bacteroides thetaiotaomicron (strain ATCC 29148 / DSM 2079 / JCM 5827 / CCUG 10774 / NCTC 10582 / VPI-5482 / E50), this protein is Adenosylhomocysteinase.